We begin with the raw amino-acid sequence, 186 residues long: ATP synthase subunit delta, cyanelle (186 aa).

It belongs to the ATPase delta chain family. In terms of assembly, F-type ATPases have 2 components, F(1) - the catalytic core - and F(0) - the membrane proton channel. F(1) has five subunits: alpha(3), beta(3), gamma(1), delta(1), epsilon(1). CF(0) has four main subunits: a(1), b(1), b'(1) and c(10-14). The alpha and beta chains form an alternating ring which encloses part of the gamma chain. F(1) is attached to F(0) by a central stalk formed by the gamma and epsilon chains, while a peripheral stalk is formed by the delta, b and b' chains.

The protein localises to the plastid. The protein resides in the cyanelle thylakoid membrane. In terms of biological role, f(1)F(0) ATP synthase produces ATP from ADP in the presence of a proton or sodium gradient. F-type ATPases consist of two structural domains, F(1) containing the extramembraneous catalytic core and F(0) containing the membrane proton channel, linked together by a central stalk and a peripheral stalk. During catalysis, ATP synthesis in the catalytic domain of F(1) is coupled via a rotary mechanism of the central stalk subunits to proton translocation. This protein is part of the stalk that links CF(0) to CF(1). It either transmits conformational changes from CF(0) to CF(1) or is implicated in proton conduction. In Cyanophora paradoxa, this protein is ATP synthase subunit delta, cyanelle.